Reading from the N-terminus, the 143-residue chain is Nucleoside diphosphate kinase (143 aa).

Residues Lys-11, Phe-59, Arg-87, Thr-93, Arg-104, and Asn-114 each coordinate ATP. Residue His-117 is the Pros-phosphohistidine intermediate of the active site.

This sequence belongs to the NDK family. As to quaternary structure, homotetramer. Requires Mg(2+) as cofactor.

The protein localises to the cytoplasm. It catalyses the reaction a 2'-deoxyribonucleoside 5'-diphosphate + ATP = a 2'-deoxyribonucleoside 5'-triphosphate + ADP. The catalysed reaction is a ribonucleoside 5'-diphosphate + ATP = a ribonucleoside 5'-triphosphate + ADP. Major role in the synthesis of nucleoside triphosphates other than ATP. The ATP gamma phosphate is transferred to the NDP beta phosphate via a ping-pong mechanism, using a phosphorylated active-site intermediate. This Shigella boydii serotype 4 (strain Sb227) protein is Nucleoside diphosphate kinase.